We begin with the raw amino-acid sequence, 236 residues long: Truncated formate dehydrogenase 2 (236 aa).

NAD(+) contacts are provided by residues 36–37, D57, 104–108, T130, D156, and 185–188; these read RI, PLHKD, and HISG.

Belongs to the D-isomer specific 2-hydroxyacid dehydrogenase family. FDH subfamily.

The polypeptide is Truncated formate dehydrogenase 2 (Saccharomyces cerevisiae (strain ATCC 204508 / S288c) (Baker's yeast)).